Consider the following 34-residue polypeptide: Photosystem II reaction center protein M (34 aa).

Residues 5–25 form a helical membrane-spanning segment; the sequence is ILAFIATALFISIPTAFLLIP.

It belongs to the PsbM family. As to quaternary structure, PSII is composed of 1 copy each of membrane proteins PsbA, PsbB, PsbC, PsbD, PsbE, PsbF, PsbH, PsbI, PsbJ, PsbK, PsbL, PsbM, PsbT, PsbX, PsbY, PsbZ, Psb30/Ycf12, at least 3 peripheral proteins of the oxygen-evolving complex and a large number of cofactors. It forms dimeric complexes.

The protein resides in the plastid. The protein localises to the chloroplast thylakoid membrane. Functionally, one of the components of the core complex of photosystem II (PSII). PSII is a light-driven water:plastoquinone oxidoreductase that uses light energy to abstract electrons from H(2)O, generating O(2) and a proton gradient subsequently used for ATP formation. It consists of a core antenna complex that captures photons, and an electron transfer chain that converts photonic excitation into a charge separation. This subunit is found at the monomer-monomer interface. The polypeptide is Photosystem II reaction center protein M (Psilotum nudum (Whisk fern)).